The sequence spans 311 residues: Methionyl-tRNA formyltransferase (311 aa).

112 to 115 lines the (6S)-5,6,7,8-tetrahydrofolate pocket; sequence SLLP.

It belongs to the Fmt family.

It carries out the reaction L-methionyl-tRNA(fMet) + (6R)-10-formyltetrahydrofolate = N-formyl-L-methionyl-tRNA(fMet) + (6S)-5,6,7,8-tetrahydrofolate + H(+). In terms of biological role, attaches a formyl group to the free amino group of methionyl-tRNA(fMet). The formyl group appears to play a dual role in the initiator identity of N-formylmethionyl-tRNA by promoting its recognition by IF2 and preventing the misappropriation of this tRNA by the elongation apparatus. This chain is Methionyl-tRNA formyltransferase, found in Chelativorans sp. (strain BNC1).